A 412-amino-acid chain; its full sequence is tRNA (guanine-N(7)-)-methyltransferase non-catalytic subunit WDR4 (412 aa).

Ala2 is modified (N-acetylalanine). WD repeat units lie at residues 3–40 (GSVG…IYDC), 50–90 (NKGE…LFRT), 94–131 (QCLS…SFSV), 137–174 (CGRL…VSWA), 180–218 (IESF…LWEY), 230–273 (ASLQ…IFQL), and 319–373 (PVGD…SYLK). The disordered stretch occupies residues 377–412 (ERLQQQLEKKQRRRSPPPGPDGHAKKMRPGEATLSC). Phosphoserine occurs at positions 391 and 411.

It belongs to the WD repeat TRM82 family. Non-catalytic component of the METTL1-WDR4 complex, composed of METTL1 and WDR4. Interacts with FEN1; the interaction is direct.

The protein localises to the nucleus. It is found in the chromosome. The protein operates within tRNA modification; N(7)-methylguanine-tRNA biosynthesis. In terms of biological role, non-catalytic component of the METTL1-WDR4 methyltransferase complex required for the formation of N(7)-methylguanine in a subset of RNA species, such as tRNAs, mRNAs and microRNAs (miRNAs). In the METTL1-WDR4 methyltransferase complex, WDR4 acts as a scaffold for tRNA-binding. Required for the formation of N(7)-methylguanine at position 46 (m7G46) in a large subset of tRNAs that contain the 5'-RAGGU-3' motif within the variable loop. M7G46 interacts with C13-G22 in the D-loop to stabilize tRNA tertiary structure and protect tRNAs from decay. Also required for the formation of N(7)-methylguanine at internal sites in a subset of mRNAs. Also required for methylation of a specific subset of miRNAs, such as let-7. Independently of METTL1, also plays a role in genome stability: localizes at the DNA replication site and regulates endonucleolytic activities of FEN1. This chain is tRNA (guanine-N(7)-)-methyltransferase non-catalytic subunit WDR4, found in Homo sapiens (Human).